The sequence spans 56 residues: MSYDFTQYQRPSGRLLARKDFLHVVAVRDAPHDGKYAVEVPVHVTRTCLILLPRKI.

This is an uncharacterized protein from Treponema pallidum (strain Nichols).